We begin with the raw amino-acid sequence, 200 residues long: Small ribosomal subunit protein eS8B (200 aa).

Residues 1–41 (MGITRDSRHKRSATGAKRAQYRKKRKFELGRQPSNTRIGPK) form a disordered region. 2 positions are modified to phosphoserine: serine 62 and serine 99. The interval 124-145 (KGKKATATPTPKSKHVQRKHSA) is disordered. Positions 135–145 (KSKHVQRKHSA) are enriched in basic residues. 3 positions are modified to phosphoserine: serine 150, serine 154, and serine 171.

This sequence belongs to the eukaryotic ribosomal protein eS8 family. In terms of assembly, component of the small ribosomal subunit (SSU). Mature yeast ribosomes consist of a small (40S) and a large (60S) subunit. The 40S small subunit contains 1 molecule of ribosomal RNA (18S rRNA) and at least 33 different proteins. The large 60S subunit contains 3 rRNA molecules (25S, 5.8S and 5S rRNA) and at least 46 different proteins.

The protein localises to the cytoplasm. Component of the ribosome, a large ribonucleoprotein complex responsible for the synthesis of proteins in the cell. The small ribosomal subunit (SSU) binds messenger RNAs (mRNAs) and translates the encoded message by selecting cognate aminoacyl-transfer RNA (tRNA) molecules. The large subunit (LSU) contains the ribosomal catalytic site termed the peptidyl transferase center (PTC), which catalyzes the formation of peptide bonds, thereby polymerizing the amino acids delivered by tRNAs into a polypeptide chain. The nascent polypeptides leave the ribosome through a tunnel in the LSU and interact with protein factors that function in enzymatic processing, targeting, and the membrane insertion of nascent chains at the exit of the ribosomal tunnel. This chain is Small ribosomal subunit protein eS8B (rps802), found in Schizosaccharomyces pombe (strain 972 / ATCC 24843) (Fission yeast).